Consider the following 127-residue polypeptide: Cytochrome b-c1 complex subunit 7, mitochondrial (127 aa).

Belongs to the UQCRB/QCR7 family. Component of the ubiquinol-cytochrome c oxidoreductase (cytochrome b-c1 complex, complex III, CIII), a multisubunit enzyme composed of 10 subunits. The complex is composed of 3 respiratory subunits cytochrome b (COB), cytochrome c1 (CYT1) and Rieske protein (RIP1), 2 core protein subunits COR1 and QCR2, and 5 low-molecular weight protein subunits QCR6, QCR7, QCR8, QCR9 and QCR10. The complex exists as an obligatory dimer and forms supercomplexes (SCs) in the inner mitochondrial membrane with a monomer or a dimer of cytochrome c oxidase (complex IV, CIV), resulting in 2 different assemblies (supercomplexes III(2)IV and III(2)IV(2)).

It is found in the mitochondrion inner membrane. In terms of biological role, component of the ubiquinol-cytochrome c oxidoreductase, a multisubunit transmembrane complex that is part of the mitochondrial electron transport chain which drives oxidative phosphorylation. Plays an important role in the uptake of multiple carbon sources such acetate, lactate, amino acids or GlcNAc present in different host niches. The polypeptide is Cytochrome b-c1 complex subunit 7, mitochondrial (Candida albicans (strain SC5314 / ATCC MYA-2876) (Yeast)).